An 89-amino-acid polypeptide reads, in one-letter code: Translation initiation factor IF-1 1 (89 aa).

The S1-like domain maps to 1–73 (MSNKEQLIEM…TKGRITFRHL (73 aa)).

It belongs to the IF-1 family. In terms of assembly, component of the 30S ribosomal translation pre-initiation complex which assembles on the 30S ribosome in the order IF-2 and IF-3, IF-1 and N-formylmethionyl-tRNA(fMet); mRNA recruitment can occur at any time during PIC assembly.

It localises to the cytoplasm. In terms of biological role, one of the essential components for the initiation of protein synthesis. Stabilizes the binding of IF-2 and IF-3 on the 30S subunit to which N-formylmethionyl-tRNA(fMet) subsequently binds. Helps modulate mRNA selection, yielding the 30S pre-initiation complex (PIC). Upon addition of the 50S ribosomal subunit IF-1, IF-2 and IF-3 are released leaving the mature 70S translation initiation complex. This is Translation initiation factor IF-1 1 from Acidovorax sp. (strain JS42).